We begin with the raw amino-acid sequence, 1801 residues long: U3 small nucleolar RNA-associated protein 10 (1801 aa).

An HEAT 1 repeat occupies 582 to 619 (IDFQALVPFVLVALGDVSERIRREAAAVLAALGALYKK). The next 2 helical transmembrane spans lie at 945–965 (IQSGMSYLLSLALGSLLAIVN) and 1001–1021 (ALLLVAGLSVIAPELVLHSVM). HEAT repeat units follow at residues 1045 to 1082 (QTIDQVVPALIQSLRNQKRDVVSGTSELLLSFTAAFEH), 1252 to 1289 (LSLIDFLDTIEILLQRPGDELRRKVLRLLEGRLRQNPE), 1296 to 1334 (NRMLDFLPTLVTIVESSPDILLKHAAVACIDRITEKYGK), and 1757 to 1794 (ALLPEMLPYISELMEDEDENVEREVRRWVKQIEDVLGE).

Belongs to the HEATR1/UTP10 family. In terms of assembly, component of the ribosomal small subunit (SSU) processome.

Its subcellular location is the nucleus. It is found in the nucleolus. The protein localises to the membrane. Involved in nucleolar processing of pre-18S ribosomal RNA. Involved in ribosome biosynthesis. This is U3 small nucleolar RNA-associated protein 10 from Aspergillus terreus (strain NIH 2624 / FGSC A1156).